We begin with the raw amino-acid sequence, 200 residues long: Recoverin (200 aa).

Gly2 carries the N-myristoyl glycine lipid modification. 4 consecutive EF-hand domains span residues 25-60 (EEEL…FPDT), 61-96 (DPKA…TTAG), 97-132 (KTNQ…IFKM), and 147-182 (TPEK…NKEI). A Cysteine sulfenic acid (-SOH) modification is found at Cys39. Asp74, Asn76, Asp78, Thr80, Glu85, Asp110, Asp112, Asn114, Thr116, and Glu121 together coordinate Ca(2+). Residues 189–192 (EPQK) form an interaction with GRK1 region.

This sequence belongs to the recoverin family. Homodimer; disulfide-linked. Homodimerization is caused by prolonged intense illumination. May form a complex composed of RHO, GRK1 and RCVRN in a Ca(2+)-dependent manner; RCVRN prevents the interaction between GRK1 and RHO. Interacts (via C-terminus) with GRK1 (via N-terminus); the interaction is Ca(2+)-dependent. In terms of processing, the N-terminal glycine is linked to one of four different types of acyl groups. The most abundant is myristoleate (14:1), but 14:0, 14:2, and 12:0 acyl residues are also present. The Ca(2+) induced exposure of the myristoyl group, known as the calcium-myristoyl switch, promotes RCVRN binding to the photoreceptor cell membranes only when intracellular Ca(2+) concentration is high. Post-translationally, oxidation on Cys-39 occurs in response to prolonged intense illumination and results in the formation of disulfide homodimers, and to a lesser extent disulfide-linked heterodimers. As to expression, retina and pineal gland.

It is found in the photoreceptor inner segment. It localises to the cell projection. The protein resides in the cilium. Its subcellular location is the photoreceptor outer segment. The protein localises to the photoreceptor outer segment membrane. It is found in the perikaryon. Acts as a calcium sensor and regulates phototransduction of cone and rod photoreceptor cells. Modulates light sensitivity of cone photoreceptor in dark and dim conditions. In response to high Ca(2+) levels induced by low light levels, prolongs RHO/rhodopsin activation in rod photoreceptor cells by binding to and inhibiting GRK1-mediated phosphorylation of RHO/rhodopsin. Plays a role in scotopic vision/enhances vision in dim light by enhancing signal transfer between rod photoreceptors and rod bipolar cells. Improves rod photoreceptor sensitivity in dim light and mediates response of rod photoreceptors to facilitate detection of change and motion in bright light. The polypeptide is Recoverin (RCVRN) (Homo sapiens (Human)).